The chain runs to 387 residues: MDHQNYQYQNPFERRPILKSKAPAVKWIKEWVPQDIVATGGKCHLHKWVTEDTFSRLKEKEKEPDVPEPEPEPTTEILFLCSYDGCGKTFFDVSALRKHSHIHGERQYVCDQEGCGKKFLDSSKLKRHYLIHTGERNYICTYEGCGKAFSLDFNLRSHMKTHSQENYHICPYSGCVKRYAHEYKLKNHVAAYHEKNGGGETPKYTPPAEKVLRTVKTPATVCGPSSDRPYACPYEGCEKAYIHEYKLKLHLKREHPGHLQEENADTPTLNKHNGNDRNEIDDGSDQDVYRKHASNGKGQTHKQQSRAKPNMRTPPAKVGKKGSTSSPAKARIAKKPWQAKETFEEVEREEEEDSEETEEDRDNVEDGWRFGENNEDDDDDEETEYED.

5 consecutive C2H2-type zinc fingers follow at residues 79 to 103 (FLCS…SHIH), 108 to 132 (YVCD…YLIH), 138 to 162 (YICT…MKTH), 168 to 193 (HICP…AAYH), and 230 to 255 (YACP…KREH). The MED18-binding stretch occupies residues 201 to 290 (TPKYTPPAEK…DDGSDQDVYR (90 aa)). A disordered region spans residues 258–387 (HLQEENADTP…DDDEETEYED (130 aa)). Residue Ser284 is modified to Phosphoserine. Positions 291 to 305 (KHASNGKGQTHKQQS) are enriched in basic residues. The Nuclear localization signal motif lies at 319–326 (GKKGSTSS). A coiled-coil region spans residues 339–367 (AKETFEEVEREEEEDSEETEEDRDNVEDG). Acidic residues-rich tracts occupy residues 344–363 (EEVE…DRDN) and 373–387 (NNED…EYED).

In terms of assembly, interacts with MED18 to suppress disease susceptibility via the repression of genes glutaredoxins GRX480, GRXS13 and thioredoxin TRX-h5. As to expression, mostly expressed in flowers, to a lower extent in seedlings, stems and leaves, and, at low levels, in roots and senescent leaves.

The protein resides in the nucleus. Its function is as follows. Dual-function transcription factor with both repression and activation activities. Binds to 5'-CCATATT-3' motif in target gene promoters (e.g. ABR1). Also binds to G-rich DNA motif 5'-GGGGGCAGTGG-3'. Regulates the expression of genes involved in diverse cellular pathways, including glucose metabolism, photosynthesis, phototropism and stress response (e.g. salt, drought and osmotic stress). Regulates plant immunity, especially during necrotrophic fungal infection (e.g. B.cinerea). Binds to ABR1 promoter and promotes its expression, thus negatively regulating the abscisic acid (ABA) signaling pathway. Represses ABA- and salt-responsive genes expression. In Arabidopsis thaliana (Mouse-ear cress), this protein is Zinc finger transcription factor YY1.